A 206-amino-acid polypeptide reads, in one-letter code: MPKIDLFNQNGEKVGDLQLADSVFGVEVNTYAMHQVVKALLANKRQGTQSAKTRAEVSGGGIKPWRQKGTGRARQGSIRAPQWIHGGIVFAPKPRDYRMSIPKSMKKVAMKSALTSKVNEKLMVVVDDIKLETPKTKEVVKMLNSFDAKKTLIITNNAEENVYKSARNIEGVQIIPVNNINVYDLLKYDKVVITKDAVSKIEEVYA.

The segment at 47–76 (GTQSAKTRAEVSGGGIKPWRQKGTGRARQG) is disordered.

The protein belongs to the universal ribosomal protein uL4 family. In terms of assembly, part of the 50S ribosomal subunit.

Its function is as follows. One of the primary rRNA binding proteins, this protein initially binds near the 5'-end of the 23S rRNA. It is important during the early stages of 50S assembly. It makes multiple contacts with different domains of the 23S rRNA in the assembled 50S subunit and ribosome. Forms part of the polypeptide exit tunnel. In Clostridium botulinum (strain Okra / Type B1), this protein is Large ribosomal subunit protein uL4.